We begin with the raw amino-acid sequence, 276 residues long: Myoblast determination protein 1 homolog 1 (276 aa).

The bHLH domain maps to 84 to 135 (DRRKAATMRERRRLSKVNDAFETLKRCTSTNPNQRLPKVDILRNAISYIESL). The tract at residues 228 to 253 (CPAVQDGSEGSSPCSPGDGSIASENG) is disordered.

Efficient DNA binding requires dimerization with another bHLH protein.

It is found in the nucleus. In terms of biological role, may act as a transcriptional activator that promotes transcription of muscle-specific target genes and plays a role in muscle differentiation. This Oncorhynchus mykiss (Rainbow trout) protein is Myoblast determination protein 1 homolog 1 (myod1).